The following is a 365-amino-acid chain: Phosphatidylcholine:ceramide cholinephosphotransferase 2 (365 aa).

Residues Met1–Glu14 are compositionally biased toward basic and acidic residues. The segment at Met1 to Gly52 is disordered. A compositionally biased stretch (polar residues) spans Asn15 to Arg26. A run of 5 helical transmembrane segments spans residues Gly80 to Val100, Phe128 to Phe148, Phe159 to Leu179, His218 to Ile240, and Phe248 to Val268. The active site involves His229. Active-site residues include His272 and Asp276. The chain crosses the membrane as a helical span at residues Tyr273–Trp290. Over Tyr291 to Thr365 the chain is Cytoplasmic. S-palmitoyl cysteine attachment occurs at residues Cys331, Cys332, Cys343, and Cys348.

Belongs to the sphingomyelin synthase family. In terms of processing, palmitoylated on Cys-331, Cys-332, Cys-343 and Cys-348; which plays an important role in plasma membrane localization.

The protein resides in the cell membrane. It is found in the golgi apparatus membrane. The enzyme catalyses an N-acylsphing-4-enine + a 1,2-diacyl-sn-glycero-3-phosphocholine = a sphingomyelin + a 1,2-diacyl-sn-glycerol. It catalyses the reaction an N-acylsphinganine + a 1,2-diacyl-sn-glycero-3-phosphocholine = an N-acylsphinganine-1-phosphocholine + a 1,2-diacyl-sn-glycerol. The catalysed reaction is an N-acyl-(4R)-4-hydroxysphinganine + a 1,2-diacyl-sn-glycero-3-phosphocholine = an N-acyl-(4R)-4-hydroxysphinganine-phosphocholine + a 1,2-diacyl-sn-glycerol. It carries out the reaction an N-acylsphing-4-enine + a 1,2-diacyl-sn-glycero-3-phosphoethanolamine = an N-acylsphing-4-enine 1-phosphoethanolamine + a 1,2-diacyl-sn-glycerol. The enzyme catalyses an N-acylsphinganine + a 1,2-diacyl-sn-glycero-3-phosphoethanolamine = an N-acylsphinganine-1-phosphoethanolamine + a 1,2-diacyl-sn-glycerol. It catalyses the reaction an N-acyl-(4R)-4-hydroxysphinganine + a 1,2-diacyl-sn-glycero-3-phosphoethanolamine = an N-acyl-(4R)-4-hydroxysphinganine-1-phosphoethanolamine + a 1,2-diacyl-sn-glycerol. The catalysed reaction is 1,2-dihexadecanoyl-sn-glycero-3-phosphocholine + an N-acylsphing-4-enine = 1,2-dihexadecanoyl-sn-glycerol + a sphingomyelin. It carries out the reaction 1-(9Z-octadecenoyl)-2-acyl-sn-3-glycerol + a sphingomyelin = a 1-(9Z-octadecenoyl)-2-acyl-sn-glycero-3-phosphocholine + an N-acylsphing-4-enine. The enzyme catalyses N-hexadecanoylsphinganine + a 1,2-diacyl-sn-glycero-3-phosphocholine = N-hexadecanoyl-sphinganine-1-phosphocholine + a 1,2-diacyl-sn-glycerol. It catalyses the reaction N-hexadecanoyl-(4R)-hydroxysphinganine + a 1,2-diacyl-sn-glycero-3-phosphocholine = N-hexadecanoyl-(4R)-hydroxysphinganine-phosphocholine + a 1,2-diacyl-sn-glycerol. The catalysed reaction is N-hexadecanoylsphinganine + a 1,2-diacyl-sn-glycero-3-phosphoethanolamine = N-hexadecanoyl-sphinganine-1-phosphoethanolamine + a 1,2-diacyl-sn-glycerol. It carries out the reaction N-hexadecanoyl-(4R)-hydroxysphinganine + a 1,2-diacyl-sn-glycero-3-phosphoethanolamine = N-hexadecanoyl-(4R)-hydroxysphinganine-1-phosphoethanolamine + a 1,2-diacyl-sn-glycerol. It participates in sphingolipid metabolism. Its function is as follows. Sphingomyelin synthase that primarily contributes to sphingomyelin synthesis and homeostasis at the plasma membrane. Catalyzes the reversible transfer of phosphocholine moiety in sphingomyelin biosynthesis: in the forward reaction transfers phosphocholine head group of phosphatidylcholine (PC) on to ceramide (CER) to form ceramide phosphocholine (sphingomyelin, SM) and diacylglycerol (DAG) as by-product, and in the reverse reaction transfers phosphocholine from SM to DAG to form PC and CER. The direction of the reaction appears to depend on the levels of CER and DAG in the plasma membrane. Does not use free phosphorylcholine or CDP-choline as donors. Can also transfer phosphoethanolamine head group of phosphatidylethanolamine (PE) on to ceramide (CER) to form ceramide phosphoethanolamine (CPE). Regulates receptor-mediated signal transduction via mitogenic DAG and proapoptotic CER, as well as via SM, a structural component of membrane rafts that serve as platforms for signal transduction and protein sorting. To a lesser extent, plays a role in secretory transport via regulation of DAG pool at the Golgi apparatus and its downstream effects on PRKD1. Required for normal bone matrix mineralization. This Macaca fascicularis (Crab-eating macaque) protein is Phosphatidylcholine:ceramide cholinephosphotransferase 2 (SGMS2).